Here is a 255-residue protein sequence, read N- to C-terminus: MAEPTEKRLVSETGVAARVAQIVEGPIEGLGFRLVRVKISNTNGCTVQIMAERPDGTMGVDECETVSRAISPILDLEDPVGGAYYLEISSPGIDRPLVRVSDFERWAGYEAKVELAVPMDGRKRFRGILGVPSADGATVPIDLPDVKPGLPSRIDLPLRDLGEAHLVLTDDLIRESLRRGSAPPQDGEDVDEEAGEAPEDEVPQVRFIPQPKRPKPKMDKKSDKKSDKPVKAKKPKPGGGIVTKAARLKNRDTLH.

Positions 177 to 255 (LRRGSAPPQD…ARLKNRDTLH (79 aa)) are disordered. Positions 186–202 (DGEDVDEEAGEAPEDEV) are enriched in acidic residues. Residues 216–230 (PKMDKKSDKKSDKPV) are compositionally biased toward basic and acidic residues.

This sequence belongs to the RimP family.

The protein localises to the cytoplasm. In terms of biological role, required for maturation of 30S ribosomal subunits. The polypeptide is Ribosome maturation factor RimP (Methylorubrum populi (strain ATCC BAA-705 / NCIMB 13946 / BJ001) (Methylobacterium populi)).